The following is a 101-amino-acid chain: Transcription factor ILI2 (101 aa).

A disordered region spans residues 1–22; the sequence is MSSSRRSRTSSRLAAAPPPTDE. The 56-residue stretch at 8-63 folds into the bHLH domain; sequence RTSSRLAAAPPPTDEQMAELISKLQAVLPTRGGEANAKQASSAEVLQEACRYIRRL.

It belongs to the bHLH protein family.

Functionally, atypical and probable non DNA-binding bHLH transcription factor that integrates multiple signaling pathways to regulate cell elongation and plant development. The polypeptide is Transcription factor ILI2 (ILI2) (Oryza sativa subsp. indica (Rice)).